A 407-amino-acid chain; its full sequence is CCCH-type zinc finger protein oma-1 (407 aa).

Residues 1-39 form a disordered region; the sequence is MNVNGENNEKIDEHHLESSLAGVPTLPVSPLDHAKDLSQ. Over residues 7–17 the composition is skewed to basic and acidic residues; the sequence is NNEKIDEHHLE. The interval 46–80 is required for taf-4 binding; that stretch reads IGDLVTQTANLIAIKKQLLEDIAFNQHIQSMQVRA. 2 C3H1-type zinc fingers span residues 112 to 140 and 154 to 182; these read SYKTVICQAWLESKTCSFADNCRFAHGEE and KYKTKLCDKYTTTGLCPYGKRCLFIHPDH. At Thr239 the chain carries Phosphothreonine; by mbk-2 and GSK3. Phosphoserine; by mbk-2 is present on Ser302. Thr339 carries the post-translational modification Phosphothreonine; by GSK3.

In terms of assembly, interacts with taf-4 (via C-terminus). Interacts with ifet-1. Component of a ribonucleoprotein particle complex that interacts with cgh-1 and car-1 in an RNA-dependent manner. Association with many proteins is dependent on the presence of RNA. Post-translationally, phosphorylation by mbk-2 and by gsk-3 are required for its rapid degradation following meiosis II. In terms of tissue distribution, exclusively expressed in the hermaphrodite gonad. Expressed prior to oocyte division. Widely distributed throughout gonadal oocytes from the mitotic stage to the developing diakinesis stage. Expressed in sperm.

The protein localises to the cytoplasm. Its subcellular location is the cytoplasmic granule. It is found in the nucleus. In terms of biological role, zinc-finger RNA-binding protein that binds to 5'-UA[AU]-3' motifs in the 3'-UTR of maternal mRNAs to suppress translation in oocytes and embryos. Acts as a ribonucleoprotein particle component that may exert part of its function within cytoplasmic foci of unfertilized oocytes. Acts redundantly with oma-2 to control the temporal expression and distribution of maternal proteins and thereby promote meiotic progression, oocyte maturation, fertilization and embryonic development. Recruits the translational repressor ifet-1 to the 3'-UTR of mei-1 and zif-1 to negatively regulate their translation. By suppressing the translation of the E3 ligase zif-1, may in turn play a role in the stabilization of zif-1 targets such as the maternal transcriptional repressor protein pie-1. Following fertilization, sequesters the transcription initiation factor, taf-4, in the cytoplasm, which prevents its nuclear localization and thus allows for transcriptional suppression in early embryos, but not in oocytes. Also, together with oma-2, is involved in P-granule distribution during embryonic development. The sequence is that of CCCH-type zinc finger protein oma-1 from Caenorhabditis elegans.